The primary structure comprises 350 residues: Ferredoxin--NADP reductase (350 aa).

Residues aspartate 49, glutamine 57, tyrosine 62, valine 102, phenylalanine 136, aspartate 303, and threonine 344 each contribute to the FAD site.

This sequence belongs to the ferredoxin--NADP reductase type 2 family. As to quaternary structure, homodimer. Requires FAD as cofactor.

The enzyme catalyses 2 reduced [2Fe-2S]-[ferredoxin] + NADP(+) + H(+) = 2 oxidized [2Fe-2S]-[ferredoxin] + NADPH. This is Ferredoxin--NADP reductase from Granulibacter bethesdensis (strain ATCC BAA-1260 / CGDNIH1).